A 227-amino-acid chain; its full sequence is Zeamatin (227 aa).

Residues 1-20 (MAGSVAIVGIFVALLAVAGE) form the signal peptide. 8 disulfides stabilise this stretch: C30–C226, C72–C82, C87–C93, C139–C215, C145–C198, C153–C163, C167–C176, and C177–C185.

The protein belongs to the thaumatin family.

In terms of biological role, has antifungal activity. Inhibits Candida albicans and Trichoderma reesei; marginal inhibition observed against Alternaria solani and Neurospora crassa. The chain is Zeamatin (Zlp) from Zea mays (Maize).